The primary structure comprises 101 residues: Urease subunit beta (101 aa).

It belongs to the urease beta subunit family. Heterotrimer of UreA (gamma), UreB (beta) and UreC (alpha) subunits. Three heterotrimers associate to form the active enzyme.

The protein resides in the cytoplasm. The catalysed reaction is urea + 2 H2O + H(+) = hydrogencarbonate + 2 NH4(+). The protein operates within nitrogen metabolism; urea degradation; CO(2) and NH(3) from urea (urease route): step 1/1. The protein is Urease subunit beta of Burkholderia cenocepacia (strain ATCC BAA-245 / DSM 16553 / LMG 16656 / NCTC 13227 / J2315 / CF5610) (Burkholderia cepacia (strain J2315)).